The primary structure comprises 938 residues: Glutamate receptor ionotropic, NMDA 1 (938 aa).

Residues 1–18 (MSTMRLLTLALLFSCSVA) form the signal peptide. Residues 19-559 (RAACDPKIVN…TLDSFMQPFQ (541 aa)) are Extracellular-facing. 10 N-linked (GlcNAc...) asparagine glycosylation sites follow: Asn-61, Asn-203, Asn-239, Asn-276, Asn-300, Asn-350, Asn-368, Asn-440, Asn-471, and Asn-491. A disulfide bridge links Cys-79 with Cys-308. 2 cysteine pairs are disulfide-bonded: Cys-420/Cys-454 and Cys-436/Cys-455. The glycine site is built by Pro-516, Thr-518, and Arg-523. The chain crosses the membrane as a helical span at residues 560–580 (STLWLLVGLSVHVVAVMLYLL). Over 581–604 (DRFSPFGRFKVNSEEEEEDALTLS) the chain is Cytoplasmic. The tract at residues 603–624 (LSSAMWFSWGVLLNSGIGEGAP) is pore-forming. Positions 605 to 615 (SAMWFSWGVLL) form an intramembrane region, discontinuously helical. Over 616–627 (NSGIGEGAPRSF) the chain is Cytoplasmic. The chain crosses the membrane as a helical span at residues 628 to 648 (SARILGMVWAGFAMIIVASYT). At 649-811 (ANLAAFLVLD…SNAPATLTFE (163 aa)) the chain is on the extracellular side. Residue Asn-674 is glycosylated (N-linked (GlcNAc...) asparagine). 2 residues coordinate glycine: Ser-688 and Asp-732. A disulfide bond links Cys-744 and Cys-798. Asn-771 is a glycosylation site (N-linked (GlcNAc...) asparagine). Residues 812 to 835 (NMAGVFMLVAGGIVAGIFLIFIEI) form a helical membrane-spanning segment. The Cytoplasmic portion of the chain corresponds to 836-938 (AYKRHKDARR…LQLCSRHRES (103 aa)). A phosphoserine; by PKC mark is found at Ser-889, Ser-890, Ser-896, and Ser-897. Positions 889-938 (SSFKRRRSSKDTSTGGGRGALQNQKDTVLPRRAIEREEGQLQLCSRHRES) are disordered. Over residues 916–927 (VLPRRAIEREEG) the composition is skewed to basic and acidic residues.

Belongs to the glutamate-gated ion channel (TC 1.A.10.1) family. NR1/GRIN1 subfamily. As to quaternary structure, heterotetramer; the NMDAR subunits are modular and harbor tiered domains that function in concert to regulate opening and closing of the cation-selective ion channel pore. Forms heterotetrameric channels composed of two GluN1/zeta subunits (GRIN1), and two identical GluN2/epsilon subunits (GRIN2A, GRIN2B, GRIN2C or GRIN2D) or GluN3 subunits (GRIN3A or GRIN3B) (in vitro). Can also form heterotetrameric channels that contain at least two GluN1 subunits and at least two different GluN2 subunits (or a combination of one GluN2 and one GluN3 subunits) (in vitro). In vivo, the subunit composition may vary in function of the expression levels of the different subunits. Found in a complex with GRIN2A or GRIN2B, GRIN3A and PPP2CB. Found in a complex with GRIN2A or GRIN2B and GRIN3B. Interacts with SNX27 (via PDZ domain); the interaction is required for recycling to the plasma membrane when endocytosed and prevent degradation in lysosomes. Interacts with DLG4 and MPDZ. Interacts with LRFN1 and LRFN2. Interacts with MYZAP. Found in a complex with DLG4 and PRR7. Found in a complex with GRIN2B and PRR7. Interacts with PRR7; the interaction is reduced following NMDA receptor activity. Post-translationally, NMDA is probably regulated by C-terminal phosphorylation of an isoform of GRIN1 by PKC. Dephosphorylated on Ser-897 probably by protein phosphatase 2A (PPP2CB). Its phosphorylated state is influenced by the formation of the NMDAR-PPP2CB complex and the NMDAR channel activity.

The protein resides in the cell membrane. It localises to the postsynaptic cell membrane. It is found in the postsynaptic density membrane. Its subcellular location is the synaptic cell membrane. It catalyses the reaction Ca(2+)(in) = Ca(2+)(out). The catalysed reaction is Na(+)(in) = Na(+)(out). It carries out the reaction K(+)(in) = K(+)(out). NMDA glutamate receptor activity is inhbited by Mg2(+) in a voltage-dependent manner; Mg2(+)-induced blockade occurs only at negative potentials and decreases with membrane depolarization. 7-chlorokynurenate (50 uM) or Zn2(+) (100 uM) partially inhibit the NMDA glutamate receptor activity, while acide 2-amino-5-phosphonovalerique(100 uM) almost completely blocked the NMDA glutamate receptor activity. Dizocilpine (1 uM) results in long lasting and almost complete block of the NMDA glutamate receptor activity. Functionally, component of N-methyl-D-aspartate (NMDA) receptors (NMDARs) that function as heterotetrameric, ligand-gated cation channels with high calcium permeability and voltage-dependent block by Mg(2+). NMDARs participate in synaptic plasticity for learning and memory formation by contributing to the long-term potentiation (LTP). Channel activation requires binding of the neurotransmitter L-glutamate to the GluN2 subunit, glycine or D-serine binding to the GluN1 subunit, plus membrane depolarization to eliminate channel inhibition by Mg(2+). NMDARs mediate simultaneously the potasium efflux and the influx of calcium and sodium. Each GluN2 or GluN3 subunit confers differential attributes to channel properties, including activation, deactivation and desensitization kinetics, pH sensitivity, Ca2(+) permeability, and binding to allosteric modulators. The polypeptide is Glutamate receptor ionotropic, NMDA 1 (Homo sapiens (Human)).